A 238-amino-acid chain; its full sequence is Ribonuclease PH (238 aa).

Residues Arg86 and 124–126 (GTR) each bind phosphate.

This sequence belongs to the RNase PH family. As to quaternary structure, homohexameric ring arranged as a trimer of dimers.

It carries out the reaction tRNA(n+1) + phosphate = tRNA(n) + a ribonucleoside 5'-diphosphate. In terms of biological role, phosphorolytic 3'-5' exoribonuclease that plays an important role in tRNA 3'-end maturation. Removes nucleotide residues following the 3'-CCA terminus of tRNAs; can also add nucleotides to the ends of RNA molecules by using nucleoside diphosphates as substrates, but this may not be physiologically important. Probably plays a role in initiation of 16S rRNA degradation (leading to ribosome degradation) during starvation. The sequence is that of Ribonuclease PH from Geobacter metallireducens (strain ATCC 53774 / DSM 7210 / GS-15).